The primary structure comprises 127 residues: Large ribosomal subunit protein eL8 (127 aa).

Belongs to the eukaryotic ribosomal protein eL8 family. As to quaternary structure, part of the 50S ribosomal subunit. Component of box C/D small ribonucleoprotein (sRNP) particles that contain rpl7ae, FlpA and nop5, plus a guide RNA. These sRNP particles form homodimers, giving rise to an asymmetric holoenzyme. Probably part of the RNase P complex.

It is found in the cytoplasm. Functionally, multifunctional RNA-binding protein that recognizes the K-turn motif in ribosomal RNA, the RNA component of RNase P, box H/ACA, box C/D and box C'/D' sRNAs. In Saccharolobus solfataricus (strain ATCC 35092 / DSM 1617 / JCM 11322 / P2) (Sulfolobus solfataricus), this protein is Large ribosomal subunit protein eL8.